We begin with the raw amino-acid sequence, 112 residues long: Class I hydrophobin 17 (112 aa).

Positions 1-19 (MYSQSMVLLAAAFASFVAA) are cleaved as a signal peptide. Cystine bridges form between cysteine 30-cysteine 90, cysteine 37-cysteine 84, cysteine 38-cysteine 74, and cysteine 91-cysteine 104. Residue asparagine 108 is glycosylated (N-linked (GlcNAc...) asparagine).

It belongs to the fungal hydrophobin family. In terms of assembly, self-assembles to form functional amyloid fibrils called rodlets. Self-assembly into fibrillar rodlets occurs spontaneously at hydrophobic:hydrophilic interfaces and the rodlets further associate laterally to form amphipathic monolayers.

It localises to the secreted. Its subcellular location is the cell wall. Its function is as follows. Aerial growth, conidiation, and dispersal of filamentous fungi in the environment rely upon a capability of their secreting small amphipathic proteins called hydrophobins (HPBs) with low sequence identity. Class I can self-assemble into an outermost layer of rodlet bundles on aerial cell surfaces, conferring cellular hydrophobicity that supports fungal growth, development and dispersal; whereas Class II form highly ordered films at water-air interfaces through intermolecular interactions but contribute nothing to the rodlet structure. Hydph17 is a class I hydrophobin involved in mycelial growth. This chain is Class I hydrophobin 17, found in Pleurotus ostreatus (strain PC15) (Oyster mushroom).